The following is a 224-amino-acid chain: Protein GrpE (224 aa).

2 stretches are compositionally biased toward polar residues: residues 1–16 (MSGDASTSAQDQNVES) and 209–224 (ESSSDAASEQPQEGDA). Disordered stretches follow at residues 1 to 35 (MSGDASTSAQDQNVESNDVPAIPDVDAGTPIDPVV) and 203 to 224 (SMGPGPESSSDAASEQPQEGDA).

This sequence belongs to the GrpE family. Homodimer.

It is found in the cytoplasm. Participates actively in the response to hyperosmotic and heat shock by preventing the aggregation of stress-denatured proteins, in association with DnaK and GrpE. It is the nucleotide exchange factor for DnaK and may function as a thermosensor. Unfolded proteins bind initially to DnaJ; upon interaction with the DnaJ-bound protein, DnaK hydrolyzes its bound ATP, resulting in the formation of a stable complex. GrpE releases ADP from DnaK; ATP binding to DnaK triggers the release of the substrate protein, thus completing the reaction cycle. Several rounds of ATP-dependent interactions between DnaJ, DnaK and GrpE are required for fully efficient folding. This is Protein GrpE from Synechococcus sp. (strain CC9902).